The following is a 760-amino-acid chain: Xaa-Pro dipeptidyl-peptidase (760 aa).

Catalysis depends on charge relay system residues serine 349, aspartate 469, and histidine 499.

The protein belongs to the peptidase S15 family. Homodimer.

It localises to the cytoplasm. It catalyses the reaction Hydrolyzes Xaa-Pro-|- bonds to release unblocked, N-terminal dipeptides from substrates including Ala-Pro-|-p-nitroanilide and (sequentially) Tyr-Pro-|-Phe-Pro-|-Gly-Pro-|-Ile.. Its function is as follows. Removes N-terminal dipeptides sequentially from polypeptides having unsubstituted N-termini provided that the penultimate residue is proline. This Streptococcus pyogenes serotype M1 protein is Xaa-Pro dipeptidyl-peptidase.